Here is a 76-residue protein sequence, read N- to C-terminus: DNA-directed RNA polymerase subunit Rpo5 (76 aa).

Belongs to the archaeal Rpo5/eukaryotic RPB5 RNA polymerase subunit family. In terms of assembly, part of the RNA polymerase complex.

The protein localises to the cytoplasm. The enzyme catalyses RNA(n) + a ribonucleoside 5'-triphosphate = RNA(n+1) + diphosphate. In terms of biological role, DNA-dependent RNA polymerase (RNAP) catalyzes the transcription of DNA into RNA using the four ribonucleoside triphosphates as substrates. In Archaeoglobus fulgidus (strain ATCC 49558 / DSM 4304 / JCM 9628 / NBRC 100126 / VC-16), this protein is DNA-directed RNA polymerase subunit Rpo5.